A 61-amino-acid polypeptide reads, in one-letter code: Large ribosomal subunit protein bL32 (61 aa).

Over residues 1–16 (MAVPKKKTSKSRKNMR) the composition is skewed to basic residues. The segment at 1–20 (MAVPKKKTSKSRKNMRRAHD) is disordered.

Belongs to the bacterial ribosomal protein bL32 family.

The protein is Large ribosomal subunit protein bL32 of Pelobacter propionicus (strain DSM 2379 / NBRC 103807 / OttBd1).